We begin with the raw amino-acid sequence, 287 residues long: ATP synthase gamma chain (287 aa).

It belongs to the ATPase gamma chain family. F-type ATPases have 2 components, CF(1) - the catalytic core - and CF(0) - the membrane proton channel. CF(1) has five subunits: alpha(3), beta(3), gamma(1), delta(1), epsilon(1). CF(0) has three main subunits: a, b and c.

The protein resides in the cell inner membrane. Its function is as follows. Produces ATP from ADP in the presence of a proton gradient across the membrane. The gamma chain is believed to be important in regulating ATPase activity and the flow of protons through the CF(0) complex. The sequence is that of ATP synthase gamma chain from Methylococcus capsulatus (strain ATCC 33009 / NCIMB 11132 / Bath).